The primary structure comprises 248 residues: Probable transcriptional regulatory protein NGR_c27950 (248 aa).

It belongs to the TACO1 family.

The protein resides in the cytoplasm. The polypeptide is Probable transcriptional regulatory protein NGR_c27950 (Sinorhizobium fredii (strain NBRC 101917 / NGR234)).